We begin with the raw amino-acid sequence, 276 residues long: UPF0276 protein PA4106 (276 aa).

The protein belongs to the UPF0276 family.

This Pseudomonas aeruginosa (strain ATCC 15692 / DSM 22644 / CIP 104116 / JCM 14847 / LMG 12228 / 1C / PRS 101 / PAO1) protein is UPF0276 protein PA4106.